The primary structure comprises 118 residues: UPF0102 protein DICTH_1420 (118 aa).

The protein belongs to the UPF0102 family.

The protein is UPF0102 protein DICTH_1420 of Dictyoglomus thermophilum (strain ATCC 35947 / DSM 3960 / H-6-12).